We begin with the raw amino-acid sequence, 479 residues long: NAC domain-containing protein 45 (479 aa).

In terms of domain architecture, NAC spans 6–157; sequence LPPGFRFHPT…AYALCRVFKK (152 aa). A DNA-binding region spans residues 105–163; it reads IGTKKTLVYYRGRAPHGIRTGWVMHEYRLDETECEPSAYGMQDAYALCRVFKKIVIEAK.

Expressed in a few sieve element cells before enucleation and in phloem-pole pericycle cells.

Its subcellular location is the nucleus. Transcription factor directing sieve element enucleation and cytosol degradation. Not required for formation of lytic vacuoles. Regulates, with NAC086, the transcription of NEN1, NEN2, NEN3, NEN4, RTM1, RTM2, UBP16, PLDZETA, ABCB10 and At1g26450. This chain is NAC domain-containing protein 45, found in Arabidopsis thaliana (Mouse-ear cress).